We begin with the raw amino-acid sequence, 507 residues long: 2,3-bisphosphoglycerate-independent phosphoglycerate mutase (507 aa).

Mn(2+) is bound by residues aspartate 13 and serine 63. Catalysis depends on serine 63, which acts as the Phosphoserine intermediate. Residues histidine 124, 153-154, arginine 183, arginine 189, 254-257, and lysine 330 each bind substrate; these read RD and RADR. 5 residues coordinate Mn(2+): aspartate 396, histidine 400, aspartate 437, histidine 438, and histidine 456.

It belongs to the BPG-independent phosphoglycerate mutase family. As to quaternary structure, monomer. Mn(2+) serves as cofactor.

It carries out the reaction (2R)-2-phosphoglycerate = (2R)-3-phosphoglycerate. It participates in carbohydrate degradation; glycolysis; pyruvate from D-glyceraldehyde 3-phosphate: step 3/5. Catalyzes the interconversion of 2-phosphoglycerate and 3-phosphoglycerate. In Paracoccus denitrificans (strain Pd 1222), this protein is 2,3-bisphosphoglycerate-independent phosphoglycerate mutase.